The primary structure comprises 54 residues: Preprotein translocase subunit SecG (54 aa).

Over M1–A30 the chain is Cytoplasmic. A helical transmembrane segment spans residues P31–L52. The Extracellular segment spans residues L53–A54.

It belongs to the SEC61-beta family. As to quaternary structure, component of the protein translocase complex. Heterotrimer consisting of alpha (SecY), beta (SecG) and gamma (SecE) subunits. Can form oligomers of the heterotrimer.

It is found in the cell membrane. Its function is as follows. Involved in protein export. The function of the beta subunit is unknown, but it may be involved in stabilization of the trimeric complex. The protein is Preprotein translocase subunit SecG of Methanococcus aeolicus (strain ATCC BAA-1280 / DSM 17508 / OCM 812 / Nankai-3).